The following is a 465-amino-acid chain: ATP-dependent protease ATPase subunit HslU (465 aa).

Residues Val18, 60 to 65 (GVGKTE), Asp277, Glu342, and Arg414 contribute to the ATP site.

The protein belongs to the ClpX chaperone family. HslU subfamily. A double ring-shaped homohexamer of HslV is capped on each side by a ring-shaped HslU homohexamer. The assembly of the HslU/HslV complex is dependent on binding of ATP.

It is found in the cytoplasm. Functionally, ATPase subunit of a proteasome-like degradation complex; this subunit has chaperone activity. The binding of ATP and its subsequent hydrolysis by HslU are essential for unfolding of protein substrates subsequently hydrolyzed by HslV. HslU recognizes the N-terminal part of its protein substrates and unfolds these before they are guided to HslV for hydrolysis. The chain is ATP-dependent protease ATPase subunit HslU from Caldicellulosiruptor saccharolyticus (strain ATCC 43494 / DSM 8903 / Tp8T 6331).